Consider the following 148-residue polypeptide: 3-hydroxyacyl-[acyl-carrier-protein] dehydratase FabZ (148 aa).

Histidine 49 is a catalytic residue.

It belongs to the thioester dehydratase family. FabZ subfamily.

It localises to the cytoplasm. The enzyme catalyses a (3R)-hydroxyacyl-[ACP] = a (2E)-enoyl-[ACP] + H2O. In terms of biological role, involved in unsaturated fatty acids biosynthesis. Catalyzes the dehydration of short chain beta-hydroxyacyl-ACPs and long chain saturated and unsaturated beta-hydroxyacyl-ACPs. The polypeptide is 3-hydroxyacyl-[acyl-carrier-protein] dehydratase FabZ (Ehrlichia canis (strain Jake)).